Here is a 516-residue protein sequence, read N- to C-terminus: Membrane-bound transcription factor site-2 protease (516 aa).

The Cytoplasmic portion of the chain corresponds to 1 to 3 (MIP). Residues 4-24 (VSLVVVVVGGWTAVYLTDLVL) form a helical membrane-spanning segment. Over 25-74 (KSSVYFKHSYEDWLENNGLSISPFHIRWQTAVFNRAFYSWGRRKARMLYQ) the chain is Lumenal. 2 helical membrane-spanning segments follow: residues 75–95 (WFNF…FLLG) and 96–107 (KTLIQTLGQMMA). At 108 to 141 (DSSYSSSSSSSSHSSSSSSSSSSSSSLYNEQVLQ) the chain is on the lumenal side. The helical transmembrane segment at 142 to 166 (VVVPGINLPVNQLTYFFAAVLISGV) threads the bilayer. H168 is a binding site for Zn(2+). E169 is an active-site residue. 3 helical membrane passes run 171–183 (GHGI…QVRF), 184–206 (NGFG…TTHL), and 226–248 (FILA…PFYY). H172 is a binding site for Zn(2+). Residues 249-443 (TGVGVLITEV…LPVVVETFVK (195 aa)) are Lumenal-facing. The N-linked (GlcNAc...) asparagine glycan is linked to N334. The next 2 membrane-spanning stretches (helical) occupy residues 444-461 (YLIS…VPCF) and 462-473 (ALDGQWILNSFL). The Lumenal portion of the chain corresponds to 474–489 (DATLTSVIGDNDVKDL). Residues 490–510 (IGFFILLGGSILLAANVALGL) form a helical membrane-spanning segment. Topologically, residues 511 to 516 (WMVTAR) are cytoplasmic.

Belongs to the peptidase M50A family. Requires Zn(2+) as cofactor.

The protein localises to the membrane. Its subcellular location is the cytoplasm. The protein resides in the golgi apparatus membrane. The catalysed reaction is Cleaves several transcription factors that are type-2 transmembrane proteins within membrane-spanning domains. Known substrates include sterol regulatory element-binding protein (SREBP) -1, SREBP-2 and forms of the transcriptional activator ATF6. SREBP-2 is cleaved at the site 477-DRSRILL-|-CVLTFLCLSFNPLTSLLQWGGA-505. The residues Asn-Pro, 11 residues distal to the site of cleavage in the membrane-spanning domain, are important for cleavage by S2P endopeptidase. Replacement of either of these residues does not prevent cleavage, but there is no cleavage if both of these residues are replaced.. Zinc metalloprotease that mediates intramembrane proteolysis of proteins such as ATF6, ATF6B, SREBF1/SREBP1 and SREBF2/SREBP2. Catalyzes the second step in the proteolytic activation of the sterol regulatory element-binding proteins (SREBPs) SREBF1/SREBP1 and SREBF2/SREBP2: cleaves SREBPs within the first transmembrane segment, thereby releasing the N-terminal segment with a portion of the transmembrane segment attached. Mature N-terminal SREBP fragments shuttle to the nucleus and activate gene transcription. Also mediates the second step in the proteolytic activation of the cyclic AMP-dependent transcription factor ATF-6 (ATF6 and ATF6B). Involved in intramembrane proteolysis during bone formation. In astrocytes and osteoblasts, upon DNA damage and ER stress, mediates the second step of the regulated intramembrane proteolytic activation of the transcription factor CREB3L1, leading to the inhibition of cell-cycle progression. This chain is Membrane-bound transcription factor site-2 protease, found in Bos taurus (Bovine).